We begin with the raw amino-acid sequence, 259 residues long: Flagellar L-ring protein (259 aa).

The signal sequence occupies residues 1–15 (MKRISLIALVTLMSG). Cys-16 is lipidated: N-palmitoyl cysteine. Cys-16 is lipidated: S-diacylglycerol cysteine.

This sequence belongs to the FlgH family. As to quaternary structure, the basal body constitutes a major portion of the flagellar organelle and consists of four rings (L,P,S, and M) mounted on a central rod.

The protein localises to the cell outer membrane. It localises to the bacterial flagellum basal body. Its function is as follows. Assembles around the rod to form the L-ring and probably protects the motor/basal body from shearing forces during rotation. The polypeptide is Flagellar L-ring protein (Vibrio vulnificus (strain YJ016)).